Here is a 139-residue protein sequence, read N- to C-terminus: Hydrogenase maturation factor HypA (139 aa).

Residue His-2 participates in Ni(2+) binding. Residues Cys-73, Cys-76, Cys-110, and Cys-113 each contribute to the Zn(2+) site.

The protein belongs to the HypA/HybF family.

Involved in the maturation of [NiFe] hydrogenases. Required for nickel insertion into the metal center of the hydrogenase. The sequence is that of Hydrogenase maturation factor HypA from Thermococcus onnurineus (strain NA1).